We begin with the raw amino-acid sequence, 1783 residues long: MKADLATAKGSSPAFSAPRTYRARLLSRCLNKCFNTVLVSGGAAESRFRGGATVGKAGAHDARGVGDLVDFLQQEATPYEVNVPPYLILPPLKSNEATTHRRAGDSGGQGPAAAGGRGQARHGRRQAAASAATTVSAAPQTGATKPAATAKTTPQRPRGSDADAGSRAQSQYGFGDPPGGGALKGAVDAASDAAPDVAAASPAPAGISDQLSTPACPPEREPQAGKPRASGRAPAAPGVGPQDVGGGSGACAPAPDESHMGLTHRDQGHDERISQTAGEAWKAGAVAAPPAAPTPSPPGLAAAPTRLASSALGTHSSDGDMRRAVPGRDTPSLSAVAGPVTLSGSSSSSSGRNSSSNSNTSTSSTSNGVTITSNVGVNGASPQERLMAARRAVVTMQWNTHLGRRGRSFAPLPTGGMSIATSAASSSTSSASSSSSMNDGSNAKKTSDAAVSLPVGQQPAAEQPHVPTAPGGPSQTGASAVAAQAPSSAMPTAAMAATMGSATIGSAATLPTAAVVSSAAAEGTQPSGLLLAGGRPALLGRTIQGRIARLQAAREALRAARHARVGAAMQPPPVQARPVQGQSGQVPQVGQGPVQSQPGRRQEPAASATKLHVADGLPARPVQPAVSATDLQTDTATAASAPFPVSDASLGSTEPLAASAPTTSLASASGPAIGTSSSNAHSSAAASEAAAGTVRAPTDTAAPAASPAATAPALASTPFATPAAAPLPEPPEVVAARDLLGRLSRYQPAGRDDGPAVLAPHARYSPAAYQAAAAAAAAQPQLLLAPLSLPQLAAVVAGYAAAGHRHEPLLEALAGVALAKAGGAGGIGGGAAGAVPRGQAASELKRSRLTFRAACVFLTALARLGYRGGAVTRLAAALAVWLARQLNTGAVTPRAKWKGTWLAAALWAYATLEQLPAAAPTPPPPPASAAAASTAPRAAESRPAAAPAPAEATATRTPLLTAPQLAPQRASASPDLELARGGVLLFTEAAEAVRVAPGWLHLMDGREALWSLWAFRKAAAAYGRGEGTASGAVYVAAAGGYAMLQSGGAGGGGMGQAGGAGRGGAGAGAAALPLVVAAPRYEANPLVELKLADRATSLFPQLDPGQLAEAHVLLLECGLAEDELPQALTALRRCVIARADSIRPQPLAVMVATLAVMQVRDVVWLSALAMACRNKMINMSPDQIVAVLHAFGSVLRFHHLLLFHAAAVVCSCPGMWRLGGMGAGEVLRLVGAFAATRHYEGRLLRAAAERMLQLGSTGSTAGQRAGLLQSLCSLHYRHNGLLRIVVADTFGLADLSPGSAGQPRNMGSSAKLAGAGTAAAAGAAAPGLPPSLLVAVAEACGQLQHRPPGLLQALHASRAAVWPRVGLAQRATLCWALLVLTGGLPAQYLPADRPRDAKRHVRQSAAAAAAAAAAAQDQRQEQHQQHQQEQLLAKALVEYLQALGAGVQRWPPPAPSSYHLQLLVACTVLASCTPPPAPAHMQQQPQSSGTGCQKSRRRRMRYRRSRGAVLQQQLKEELDKLPASAMQRALEVQRRARSAALGGWAHEVASVVREVLQEASVDARADSEGRQPLPPHWLGQPPATLLSAAVSTGVEVCDGAMLVDVAVELEVEAGLPRPQVKGRGRGRRTAARATTDVQGAEQAVVTEEAAYEHSHPLRQRLQLALDLCPLPPPPPRTAAPVLSAAYAPGAGGAGTSATAEVTANRTTGAPRSLAVGAAAGGAVIRNSRWLLSGAGALRRRLLTHAGWLVVPVRERQWKDLRSAEQQRRVVREWLKAVLLHAQQ.

The N-terminal 40 residues, 1–40, are a transit peptide targeting the chloroplast; that stretch reads MKADLATAKGSSPAFSAPRTYRARLLSRCLNKCFNTVLVS. Disordered regions lie at residues 97–378, 420–484, 563–610, 652–709, 918–971, 1395–1427, 1476–1506, and 1620–1639; these read ATTH…VGVN, ATSA…VAAQ, ARVG…SATK, STEP…SPAA, AAPT…QRAS, RDAK…QQHQ, PAPA…RRSR, and VKGR…DVQG. Over residues 105 to 118 the composition is skewed to gly residues; it reads DSGGQGPAAAGGRG. 3 stretches are compositionally biased toward low complexity: residues 126 to 157, 186 to 205, and 224 to 242; these read QAAA…PQRP, AVDA…PAPA, and AGKP…VGPQ. The span at 256-273 shows a compositional bias: basic and acidic residues; sequence DESHMGLTHRDQGHDERI. Low complexity predominate over residues 277–289; the sequence is AGEAWKAGAVAAP. Positions 307-316 are enriched in polar residues; sequence LASSALGTHS. 7 stretches are compositionally biased toward low complexity: residues 343 to 374, 420 to 436, 577 to 599, 655 to 669, 676 to 709, 928 to 970, and 1403 to 1417; these read SGSS…ITSN, ATSA…SSSS, RPVQ…SQPG, PLAA…ASAS, SSSN…SPAA, SAAA…PQRA, and QSAA…AAQD. 2 stretches are compositionally biased toward basic residues: residues 1494–1506 and 1620–1630; these read KSRR…RRSR and VKGRGRGRRTA. Residues 1713-1772 enclose the RAP domain; that stretch reads LAVGAAAGGAVIRNSRWLLSGAGALRRRLLTHAGWLVVPVRERQWKDLRSAEQQRRVVRE.

Part of a 1700 kDa complex that includes the precursor RNA to exon 1 and the tscA RNA.

The protein resides in the plastid. It is found in the chloroplast stroma. Its function is as follows. Required for trans-splicing of exons 1 and 2 of the chloroplast encoded psaA mRNA (a group II intron). May be required for stability of the chloroplast RNA-protein complex in which it is found. This chain is Trans-splicing factor Raa3, chloroplastic (RAA3), found in Chlamydomonas reinhardtii (Chlamydomonas smithii).